The sequence spans 621 residues: MTDASVKETFSFQTEVGQLLDIVAGSLYSNREIFLRELVSNASDACDKLRYEALTNPSLAQNADEFAISLAVDKKAKTLSVSDNGIGMNHGDLLDTLGTIARSGTGAFLDALKSEEKGDIGLIGQFGVGFYSAFMVAERVDVLTRKAGEDESWLWSSDGKGEFSIEPGERAQSGTTVTLHLKKDAKEFLEESRIRHIIKTYSEHISFPVRLDTEALNSASAIWTRAPKEITEEQHTEFYHHVSNAFDKPWHVLHNRVEGTVNHTSLLYVPSMAPFDLYEAERKSHVKLYVNRVFISDNTRDLIPAYLRFLRGVVDSQDLSLNVSREMLQSDPKLAKIKTSVTKKVLSELKKKAKKSPEDYAGFWQNFGPVLKEGLIEDPALRDRILEICRFSSTKSGDVTSLADYISRCKEGQDAIYYIAGDDARKIAQSPHLEGFRAKDVEVLLLSDHVDEFWLQHITEFEGKPFKSITRGAADLDKINEGEKADDAEEEAQAPDLNDLIAALKLELGASVKDVRPSKRLTDSPVCLIADEGDIDVNLERMLKRHGQLQDAMPRVLELNPDHRIITKLAERAKGSAAASDTLLKDAAHLLLDQARIADGETPADPAEFVRRLGSVMDSAL.

Residues methionine 1–arginine 325 are a; substrate-binding. Residues glutamate 326–arginine 541 are b. The c stretch occupies residues methionine 542 to leucine 621.

Belongs to the heat shock protein 90 family. In terms of assembly, homodimer.

The protein localises to the cytoplasm. Molecular chaperone. Has ATPase activity. The sequence is that of Chaperone protein HtpG from Roseobacter denitrificans (strain ATCC 33942 / OCh 114) (Erythrobacter sp. (strain OCh 114)).